A 179-amino-acid polypeptide reads, in one-letter code: MNRLKEKFQKEITPALVSKFNYKSVMQVPKIEKIVINTGVGDAVSNSKALDNAVEELTQITGQKPVVTRAKKSIAGFRLREGMPIGAKVTLRGEQMYEFFDKLVSVSLPRVRDFRGVSKKSFDGRGNYTLGVKEQLIFPEIDYDKVSKVRGMDIVIVTTAKTDEEARELLTQFGMPFQK.

The protein belongs to the universal ribosomal protein uL5 family. As to quaternary structure, part of the 50S ribosomal subunit; part of the 5S rRNA/L5/L18/L25 subcomplex. Contacts the 5S rRNA and the P site tRNA. Forms a bridge to the 30S subunit in the 70S ribosome.

In terms of biological role, this is one of the proteins that bind and probably mediate the attachment of the 5S RNA into the large ribosomal subunit, where it forms part of the central protuberance. In the 70S ribosome it contacts protein S13 of the 30S subunit (bridge B1b), connecting the 2 subunits; this bridge is implicated in subunit movement. Contacts the P site tRNA; the 5S rRNA and some of its associated proteins might help stabilize positioning of ribosome-bound tRNAs. This chain is Large ribosomal subunit protein uL5, found in Bacillus cereus (strain 03BB102).